A 257-amino-acid chain; its full sequence is Protein CUSTOS (257 aa).

Residues 1 to 11 are compositionally biased toward low complexity; the sequence is MSDLESSSSSS. The tract at residues 1 to 72 is disordered; it reads MSDLESSSSS…HEQDGNELQT (72 aa). The span at 32 to 41 shows a compositional bias: basic and acidic residues; the sequence is QRPRGPEKPG. Residue serine 55 is modified to Phosphoserine. The residue at position 73 (threonine 73) is a Phosphothreonine. Disordered regions lie at residues 120 to 157 and 170 to 257; these read FTSI…RRCR and SAIH…VPSN. Basic residues-rich tracts occupy residues 180–190 and 227–237; these read KKKKRKLKKKA and TKKKKRKKKTK. The short motif at 228-236 is the Nucleolar localization signal (NLS) element; that stretch reads KKKKRKKKT.

This sequence belongs to the CUSTOS family.

It is found in the nucleus envelope. Its function is as follows. Plays a role in the regulation of Wnt signaling pathway during early development. This Bos taurus (Bovine) protein is Protein CUSTOS.